Consider the following 102-residue polypeptide: NADH-quinone oxidoreductase subunit K (102 aa).

3 consecutive transmembrane segments (helical) span residues 5–25, 31–51, and 66–86; these read IAHY…GIFL, IVIL…FVAF, and FVLT…VVFF.

It belongs to the complex I subunit 4L family. NDH-1 is composed of 14 different subunits. Subunits NuoA, H, J, K, L, M, N constitute the membrane sector of the complex.

It localises to the cell inner membrane. It catalyses the reaction a quinone + NADH + 5 H(+)(in) = a quinol + NAD(+) + 4 H(+)(out). NDH-1 shuttles electrons from NADH, via FMN and iron-sulfur (Fe-S) centers, to quinones in the respiratory chain. The immediate electron acceptor for the enzyme in this species is believed to be ubiquinone. Couples the redox reaction to proton translocation (for every two electrons transferred, four hydrogen ions are translocated across the cytoplasmic membrane), and thus conserves the redox energy in a proton gradient. This Brucella abortus (strain S19) protein is NADH-quinone oxidoreductase subunit K.